Here is a 158-residue protein sequence, read N- to C-terminus: NAD(P)H-quinone oxidoreductase subunit N (158 aa).

Belongs to the complex I NdhN subunit family. NDH-1 can be composed of about 15 different subunits; different subcomplexes with different compositions have been identified which probably have different functions.

Its subcellular location is the cellular thylakoid membrane. It carries out the reaction a plastoquinone + NADH + (n+1) H(+)(in) = a plastoquinol + NAD(+) + n H(+)(out). It catalyses the reaction a plastoquinone + NADPH + (n+1) H(+)(in) = a plastoquinol + NADP(+) + n H(+)(out). In terms of biological role, NDH-1 shuttles electrons from an unknown electron donor, via FMN and iron-sulfur (Fe-S) centers, to quinones in the respiratory and/or the photosynthetic chain. The immediate electron acceptor for the enzyme in this species is believed to be plastoquinone. Couples the redox reaction to proton translocation, and thus conserves the redox energy in a proton gradient. Cyanobacterial NDH-1 also plays a role in inorganic carbon-concentration. The chain is NAD(P)H-quinone oxidoreductase subunit N from Prochlorococcus marinus (strain MIT 9215).